Consider the following 352-residue polypeptide: Quinolinate synthase (352 aa).

Positions 48 and 69 each coordinate iminosuccinate. [4Fe-4S] cluster is bound at residue Cys-114. Residues 140–142 (YAN) and Ser-157 contribute to the iminosuccinate site. Cys-201 is a [4Fe-4S] cluster binding site. Residues 227-229 (HPE) and Thr-244 contribute to the iminosuccinate site. Residue Cys-298 participates in [4Fe-4S] cluster binding.

Belongs to the quinolinate synthase family. Type 1 subfamily. The cofactor is [4Fe-4S] cluster.

It localises to the cytoplasm. It carries out the reaction iminosuccinate + dihydroxyacetone phosphate = quinolinate + phosphate + 2 H2O + H(+). It functions in the pathway cofactor biosynthesis; NAD(+) biosynthesis; quinolinate from iminoaspartate: step 1/1. In terms of biological role, catalyzes the condensation of iminoaspartate with dihydroxyacetone phosphate to form quinolinate. The polypeptide is Quinolinate synthase (Pseudomonas putida (strain ATCC 700007 / DSM 6899 / JCM 31910 / BCRC 17059 / LMG 24140 / F1)).